We begin with the raw amino-acid sequence, 149 residues long: MKLHNLRPAKGGEVKARKRVGRGYGSGLGHNAGRGRDGQNSRSGGGVRPGFEGGQMPLFRRLPKRGFKNHFAKQYAEINIRDLNCFEDGEEITPEILANAGFFKPAKAKDGVKILGDGEITKKLTIKANKFTKSAEEKITKAGGKVEVI.

The segment at 1–58 (MKLHNLRPAKGGEVKARKRVGRGYGSGLGHNAGRGRDGQNSRSGGGVRPGFEGGQMPL) is disordered. Composition is skewed to gly residues over residues 22-32 (RGYGSGLGHNA) and 43-53 (SGGGVRPGFEG).

Belongs to the universal ribosomal protein uL15 family. As to quaternary structure, part of the 50S ribosomal subunit.

In terms of biological role, binds to the 23S rRNA. This is Large ribosomal subunit protein uL15 from Finegoldia magna (strain ATCC 29328 / DSM 20472 / WAL 2508) (Peptostreptococcus magnus).